A 247-amino-acid polypeptide reads, in one-letter code: Phosphate import ATP-binding protein PstB (247 aa).

Positions 2-242 (CRDVNVYYGE…PRHPLTEDYI (241 aa)) constitute an ABC transporter domain. Residue 32 to 39 (GPSGCGKS) participates in ATP binding.

The protein belongs to the ABC transporter superfamily. Phosphate importer (TC 3.A.1.7) family. The complex is composed of two ATP-binding proteins (PstB), two transmembrane proteins (PstC and PstA) and a solute-binding protein (PstS).

It localises to the cell inner membrane. The enzyme catalyses phosphate(out) + ATP + H2O = ADP + 2 phosphate(in) + H(+). Functionally, part of the ABC transporter complex PstSACB involved in phosphate import. Responsible for energy coupling to the transport system. In Methylococcus capsulatus (strain ATCC 33009 / NCIMB 11132 / Bath), this protein is Phosphate import ATP-binding protein PstB.